Here is a 296-residue protein sequence, read N- to C-terminus: Ribosomal RNA small subunit methyltransferase H (296 aa).

Residues 30–32, Asp-49, Phe-76, Asp-97, and Gln-104 contribute to the S-adenosyl-L-methionine site; that span reads GGH.

This sequence belongs to the methyltransferase superfamily. RsmH family.

It localises to the cytoplasm. It carries out the reaction cytidine(1402) in 16S rRNA + S-adenosyl-L-methionine = N(4)-methylcytidine(1402) in 16S rRNA + S-adenosyl-L-homocysteine + H(+). Functionally, specifically methylates the N4 position of cytidine in position 1402 (C1402) of 16S rRNA. The sequence is that of Ribosomal RNA small subunit methyltransferase H from Mesomycoplasma hyopneumoniae (strain 232) (Mycoplasma hyopneumoniae).